We begin with the raw amino-acid sequence, 772 residues long: Heat shock protein 88 (772 aa).

Disordered stretches follow at residues 496-519 (TAAP…AEEK) and 729-772 (LGKP…DILD). The span at 497–513 (AAPAETPAETPANGEAA) shows a compositional bias: low complexity. A compositionally biased stretch (basic and acidic residues) spans 735-772 (KPVEVPKEEPKDTPMESKDAPAEEPVATKDQKMDDILD).

It belongs to the heat shock protein 70 family.

In terms of biological role, may function in protein folding and assembly, and disassembly of protein complexes. The chain is Heat shock protein 88 (hspH) from Dictyostelium discoideum (Social amoeba).